The following is a 299-amino-acid chain: Ribosomal protein L11 methyltransferase (299 aa).

Residues Thr-140, Gly-161, Asp-183, and Asn-232 each coordinate S-adenosyl-L-methionine.

It belongs to the methyltransferase superfamily. PrmA family.

It is found in the cytoplasm. The catalysed reaction is L-lysyl-[protein] + 3 S-adenosyl-L-methionine = N(6),N(6),N(6)-trimethyl-L-lysyl-[protein] + 3 S-adenosyl-L-homocysteine + 3 H(+). In terms of biological role, methylates ribosomal protein L11. This is Ribosomal protein L11 methyltransferase from Synechococcus elongatus (strain ATCC 33912 / PCC 7942 / FACHB-805) (Anacystis nidulans R2).